The following is a 1379-amino-acid chain: MAQTLSFNGRRRVRKFFGKIPEVAEMPNLIEVQKASYDQFLMVEEPKGGRPDEGLQAVFKSVFPITDFSGASMLEFVSYEFEPPKFDVDECRQRDLTYAAPLKVTLRLIVFDIDEDTGAKSIKDIKEQSVYMGDMPLMTNNGTFIVNGTERVIVSQMHRSPGVFFDHDKGKSHSSGKLLFAARVIPYRGSWLDIEFDAKDIVYARIDRRRKIPVTSLLMALGMDGEEILDTFYTKSLYKRDGEGWRIPFKPETLKGAKAITEMVDADTGEVVVEAGKKLTPRLLRTLSDKGLKALKAADDDLYGNYLAGDIVNYSTGEIYLEAGDEIDEKTLGIILANGFDEIPVLGIDHINVGAYIRNTLTADKNENRQDALFDIYRVMRPGEPPTMESAEAMFNSLFFDAERYDLSAVGRVKMNMRLDLTVEDTVRILRKDDILAVVRMLVELRDGKGEIDDIDNLGNRRVRSVGELMENQYRLGLLRMERAIKERMSSIEIDTVMPQDLINAKPAAAAVREFFGSSQLSQFMDQVNPLSEITHKRRLSALGPGGLTRERAGFEVRDVHPTHYGRICPIETPEGPNIGLINSLATFARVNKYGFIESPYRRIVDGKVTSDVLYLSAMEEAKYYVAQANAEMNADGSFVDEFVVCRHAGEVMLAPRDSMNLMDVSPKQVVSVAAALIPFLENDDANRALMGSNMQRQAVPLLRAEAPFVGTGMEPVVARDSGAAIGARRGGVVDQVDATRIVIRATEDLEAGKSGVDIYRLQKFQRSNQNTCVNQRPLVTVGDEVNRGDILADGPSTDLGDLALGRNALVAFMPWNGYNYEDSILLSERIVADDVFTSIHIEEFEVMARDTKLGPEEITRDIPNVSEEALKNLDEAGIVYIGAEVQPGDILVGKITPKGESPMTPEEKLLRAIFGEKASDVRDTSMRMPPGTYGTIVEVRVFNRHGVEKDERAMAIEREEIERLAKDRDDEQAILDRNVYGRLIEMLRGQASIAGPKGFKKGSELSNAVVSEYPRSQWWMFAVEDEKVQSELEALRGQYDESKSRLEQRFMDKVEKVQRGDEMPPGVMKMVKVFVAVKRKIQPGDKMAGRHGNKGVVSRIVPVEDMPFLEDGTHVDVVLNPLGVPSRMNVGQILETHLGWACAGMGRQIGELIEAYKANGNIEPLRKTIGDVVGDGPKAEQVHEFDDDSVLRLADQWKRGVSIATPVFDGANEADVNDMLRLAGLKDSGQSTLYDGRTGEQFDRQVTVGYIYMLKLNHLVDDKIHARSIGPYSLVTQQPLGGKAQFGGQRFGEMEVWALEAYGAAYTLQEMLTVKSDDVAGRTKVYEAIVRGDDTFEAGIPESFNVLVKEMRSLGLSVELENTKLDEAQAAQLPDAAE.

It belongs to the RNA polymerase beta chain family. In terms of assembly, the RNAP catalytic core consists of 2 alpha, 1 beta, 1 beta' and 1 omega subunit. When a sigma factor is associated with the core the holoenzyme is formed, which can initiate transcription.

It catalyses the reaction RNA(n) + a ribonucleoside 5'-triphosphate = RNA(n+1) + diphosphate. Its function is as follows. DNA-dependent RNA polymerase catalyzes the transcription of DNA into RNA using the four ribonucleoside triphosphates as substrates. The chain is DNA-directed RNA polymerase subunit beta from Rhizobium johnstonii (strain DSM 114642 / LMG 32736 / 3841) (Rhizobium leguminosarum bv. viciae).